Here is a 101-residue protein sequence, read N- to C-terminus: Apolipoprotein C-II (101 aa).

Residues 1–22 form the signal peptide; that stretch reads MGTRFLLALCLVLLVLGFEVQG. Residues 23-28 constitute a propeptide, removed in mature form; sequence AQLPQQ. A lipid binding region spans residues 66-74; sequence AVDEKLRDL. The tract at residues 78–101 is lipoprotein lipase cofactor; that stretch reads STAAMSTYTGIFTDQVLSVLKGEE.

Belongs to the apolipoprotein C2 family. Proapolipoprotein C-II is synthesized as a sialic acid containing glycoprotein which is subsequently desialylated prior to its proteolytic processing. Post-translationally, proapolipoprotein C-II, the major form found in plasma undergoes proteolytic cleavage of its N-terminal hexapeptide to generate apolipoprotein C-II, which occurs as the minor form in plasma.

Its subcellular location is the secreted. In terms of biological role, component of chylomicrons, very low-density lipoproteins (VLDL), low-density lipoproteins (LDL), and high-density lipoproteins (HDL) in plasma. Plays an important role in lipoprotein metabolism as an activator of lipoprotein lipase. Both proapolipoprotein C-II and apolipoprotein C-II can activate lipoprotein lipase. The protein is Apolipoprotein C-II (APOC2) of Papio anubis (Olive baboon).